The chain runs to 143 residues: MAKAVPKIGSRKRVRIGLRRNARFSLRKSARRITKGVIHVQASFNNTIITVTDPQGRVVFWSSAGTCGFKSSRKASPYAGQRTAVDAIRTVGLQRAEVMVKGAGSGRDAALRAIAKSGVRLSCIRDVTPMPHNGCRPPKKRRL.

The protein belongs to the universal ribosomal protein uS11 family. In terms of assembly, part of the 30S ribosomal subunit.

The protein localises to the plastid. It is found in the chloroplast. The polypeptide is Small ribosomal subunit protein uS11c (Brachypodium distachyon (Purple false brome)).